The primary structure comprises 137 residues: Ribosome-binding factor A (137 aa).

The tract at residues 114-137 is disordered; the sequence is QLIDEARAEDRELRPEDDETGNNE. The segment covering 117–127 has biased composition (basic and acidic residues); sequence DEARAEDRELR. A compositionally biased stretch (acidic residues) spans 128–137; it reads PEDDETGNNE.

This sequence belongs to the RbfA family. In terms of assembly, monomer. Binds 30S ribosomal subunits, but not 50S ribosomal subunits or 70S ribosomes.

Its subcellular location is the cytoplasm. One of several proteins that assist in the late maturation steps of the functional core of the 30S ribosomal subunit. Associates with free 30S ribosomal subunits (but not with 30S subunits that are part of 70S ribosomes or polysomes). Required for efficient processing of 16S rRNA. May interact with the 5'-terminal helix region of 16S rRNA. The protein is Ribosome-binding factor A of Alcanivorax borkumensis (strain ATCC 700651 / DSM 11573 / NCIMB 13689 / SK2).